Here is a 116-residue protein sequence, read N- to C-terminus: Calcium-regulated OB-fold protein CarO (116 aa).

Positions Met1–Ala21 are cleaved as a signal peptide.

The protein resides in the periplasm. In terms of biological role, plays a role in intracellular Ca(2+) homeostasis. Involved in cell protection against oxidative stress in strain 25W. The polypeptide is Calcium-regulated OB-fold protein CarO (Pseudomonas aeruginosa (strain ATCC 15692 / DSM 22644 / CIP 104116 / JCM 14847 / LMG 12228 / 1C / PRS 101 / PAO1)).